The following is a 261-amino-acid chain: DNA repair protein RecO (261 aa).

The protein belongs to the RecO family.

Involved in DNA repair and RecF pathway recombination. The sequence is that of DNA repair protein RecO from Chlorobium limicola (strain DSM 245 / NBRC 103803 / 6330).